Reading from the N-terminus, the 1077-residue chain is FKBP12-associated protein 1 homolog (1077 aa).

Positions 1 to 173 are disordered; sequence METSKNPSDL…MPKNSKEIKK (173 aa). Positions 15-29 are enriched in basic residues; it reads ANVKKNRRRFQKSQK. Ser33 is subject to Phosphoserine. Positions 52-64 are enriched in basic and acidic residues; that stretch reads EEVKTSLKEDSSK. Residues 76 to 87 are compositionally biased toward polar residues; that stretch reads PTSSVQLNVSKN. Basic and acidic residues predominate over residues 100–116; it reads SSKDEELRKHAKGEGKR. The segment covering 136–149 has biased composition (low complexity); that stretch reads SSNSSQETSSSKGS. Basic and acidic residues predominate over residues 153-173; it reads KSERSREAKSRMPKNSKEIKK. An RING-type; atypical zinc finger spans residues 197–247; it reads CSVCTDTINPSTSIWSCGTCYHVFHLSCIRKWCKNSIEQRNEDAWRCPYCQ. 8 consecutive NF-X1-type zinc fingers follow at residues 290-308, 348-367, 420-441, 485-503, 541-558, 595-614, 708-729, and 738-760; these read CEHP…PCTA, CGEH…ACFE, CGLH…HCPF, CGHR…TCSE, CGRH…SKAQ, CGNH…RCLE, CKTH…SCKK, and CEHV…PCKA. In terms of domain architecture, R3H spans 835 to 897; that stretch reads SDFADEVESL…KRNVMVYNKG (63 aa).

The protein belongs to the NFX1 family.

It localises to the cytoplasm. It is found in the golgi apparatus. The protein resides in the nucleus. Its function is as follows. May play a role in transcription regulation. The chain is FKBP12-associated protein 1 homolog (fap1) from Schizosaccharomyces pombe (strain 972 / ATCC 24843) (Fission yeast).